A 206-amino-acid polypeptide reads, in one-letter code: Glutathione S-transferase class-mu 28 kDa isozyme (206 aa).

In terms of domain architecture, GST N-terminal spans 1-81 (VKLIYFNGRG…FIARKHNMMG (81 aa)). Residues Tyr-5, 5–6 (YF), Arg-11, 36–40 (WPKIK), Leu-48, 50–51 (IV), and 65–66 (ES) each bind glutathione. The GST C-terminal domain occupies 83–206 (TDDEYYIIEK…YLSERHATAF (124 aa)).

It belongs to the GST superfamily. Mu family. As to quaternary structure, homodimer.

It catalyses the reaction RX + glutathione = an S-substituted glutathione + a halide anion + H(+). Its function is as follows. Conjugation of reduced glutathione to a wide number of exogenous and endogenous hydrophobic electrophiles. Functionally, GST isoenzymes appear to play a central role in the parasite detoxification system. Other functions are also suspected including a role in increasing the solubility of haematin in the parasite gut. The chain is Glutathione S-transferase class-mu 28 kDa isozyme from Schistosoma japonicum (Blood fluke).